A 156-amino-acid polypeptide reads, in one-letter code: Aspartate carbamoyltransferase regulatory chain (156 aa).

4 residues coordinate Zn(2+): C107, C112, C137, and C140.

The protein belongs to the PyrI family. As to quaternary structure, contains catalytic and regulatory chains. Requires Zn(2+) as cofactor.

In terms of biological role, involved in allosteric regulation of aspartate carbamoyltransferase. This Methanopyrus kandleri (strain AV19 / DSM 6324 / JCM 9639 / NBRC 100938) protein is Aspartate carbamoyltransferase regulatory chain.